An 89-amino-acid polypeptide reads, in one-letter code: Large ribosomal subunit protein eL34 (89 aa).

The tract at residues 1–22 (MPAPRYKSGSSKKVYRKAPGNS) is disordered.

Belongs to the eukaryotic ribosomal protein eL34 family.

The polypeptide is Large ribosomal subunit protein eL34 (Methanococcus maripaludis (strain DSM 14266 / JCM 13030 / NBRC 101832 / S2 / LL)).